We begin with the raw amino-acid sequence, 228 residues long: MILIEHILGNVKKDPVWQAKLKNATFDLLVLDQREAQKSRCRKSSTQGLDLGISLDRHVVLADGDVLAWDEKTNVAVVVQINLRDVMVIDLSELKTRSPDELIKTCFELGHALGNQHWKAVTKNNEVYVPLTVATTMMDSVMRTHGFQHLPFRFVKGAEILPRLSNSEARLLFGGAEDTDTHVHVASPLDEPHGSGLHIHGIHSHGDGHSHSHDDHDHDHNHDHDHKH.

A disordered region spans residues 193–228 (HGSGLHIHGIHSHGDGHSHSHDDHDHDHNHDHDHKH). Basic and acidic residues predominate over residues 204 to 228 (SHGDGHSHSHDDHDHDHNHDHDHKH).

This sequence belongs to the UreE family.

The protein localises to the cytoplasm. Involved in urease metallocenter assembly. Binds nickel. Probably functions as a nickel donor during metallocenter assembly. This chain is Urease accessory protein UreE, found in Yersinia rohdei.